The primary structure comprises 99 residues: Plastocyanin (99 aa).

One can recognise a Plastocyanin-like domain in the interval 1 to 99 (VEILLGGEDG…AGMVGKVTVN (99 aa)). Residues H37, C84, H87, and M92 each coordinate Cu cation.

The protein belongs to the plastocyanin family. Requires Cu(2+) as cofactor.

Its subcellular location is the plastid. The protein resides in the chloroplast thylakoid membrane. In terms of biological role, participates in electron transfer between P700 and the cytochrome b6-f complex in photosystem I. This is Plastocyanin (PETE) from Sambucus nigra (European elder).